The primary structure comprises 380 residues: Succinyl-diaminopimelate desuccinylase (380 aa).

Zn(2+) is bound at residue H69. Residue D71 is part of the active site. D102 contributes to the Zn(2+) binding site. E136 (proton acceptor) is an active-site residue. Zn(2+) is bound by residues E137, E165, and H351.

The protein belongs to the peptidase M20A family. DapE subfamily. In terms of assembly, homodimer. Zn(2+) is required as a cofactor. Co(2+) serves as cofactor.

It carries out the reaction N-succinyl-(2S,6S)-2,6-diaminopimelate + H2O = (2S,6S)-2,6-diaminopimelate + succinate. It functions in the pathway amino-acid biosynthesis; L-lysine biosynthesis via DAP pathway; LL-2,6-diaminopimelate from (S)-tetrahydrodipicolinate (succinylase route): step 3/3. In terms of biological role, catalyzes the hydrolysis of N-succinyl-L,L-diaminopimelic acid (SDAP), forming succinate and LL-2,6-diaminopimelate (DAP), an intermediate involved in the bacterial biosynthesis of lysine and meso-diaminopimelic acid, an essential component of bacterial cell walls. The protein is Succinyl-diaminopimelate desuccinylase of Bordetella petrii (strain ATCC BAA-461 / DSM 12804 / CCUG 43448).